The primary structure comprises 244 residues: Glucosamine-6-phosphate deaminase (244 aa).

Asp-67 serves as the catalytic Proton acceptor; for enolization step. Asn-136 acts as the For ring-opening step in catalysis. His-138 functions as the Proton acceptor; for ring-opening step in the catalytic mechanism. The active-site For ring-opening step is Glu-143.

The protein belongs to the glucosamine/galactosamine-6-phosphate isomerase family. NagB subfamily.

The enzyme catalyses alpha-D-glucosamine 6-phosphate + H2O = beta-D-fructose 6-phosphate + NH4(+). Its pathway is amino-sugar metabolism; N-acetylneuraminate degradation; D-fructose 6-phosphate from N-acetylneuraminate: step 5/5. Its function is as follows. Catalyzes the reversible isomerization-deamination of glucosamine 6-phosphate (GlcN6P) to form fructose 6-phosphate (Fru6P) and ammonium ion. In Clostridium botulinum (strain 657 / Type Ba4), this protein is Glucosamine-6-phosphate deaminase.